Consider the following 911-residue polypeptide: Valine--tRNA ligase (911 aa).

A 'HIGH' region motif is present at residues 57-67 (PTVSGSLHVGH). A 'KMSKS' region motif is present at residues 599-603 (KMSKS). Lysine 602 lines the ATP pocket. A disordered region spans residues 882 to 911 (EESAAEGTPETEVAVEASELGEPPAKKPKH).

It belongs to the class-I aminoacyl-tRNA synthetase family. ValS type 2 subfamily. As to quaternary structure, monomer.

It is found in the cytoplasm. It carries out the reaction tRNA(Val) + L-valine + ATP = L-valyl-tRNA(Val) + AMP + diphosphate. Functionally, catalyzes the attachment of valine to tRNA(Val). As ValRS can inadvertently accommodate and process structurally similar amino acids such as threonine, to avoid such errors, it has a 'posttransfer' editing activity that hydrolyzes mischarged Thr-tRNA(Val) in a tRNA-dependent manner. This chain is Valine--tRNA ligase, found in Bifidobacterium longum (strain NCC 2705).